The chain runs to 862 residues: DNA mismatch repair protein MutS (862 aa).

608–615 (GPNMAGKS) serves as a coordination point for ATP.

It belongs to the DNA mismatch repair MutS family.

In terms of biological role, this protein is involved in the repair of mismatches in DNA. It is possible that it carries out the mismatch recognition step. This protein has a weak ATPase activity. This is DNA mismatch repair protein MutS from Bacteroides thetaiotaomicron (strain ATCC 29148 / DSM 2079 / JCM 5827 / CCUG 10774 / NCTC 10582 / VPI-5482 / E50).